Consider the following 360-residue polypeptide: Methionine import ATP-binding protein MetN (360 aa).

The tract at residues 1-22 (MSHTASTPTPEEYSAQQPSTQG) is disordered. An ABC transporter domain is found at 25-265 (VEFRGITKVF…PQTQVAQKFV (241 aa)). Position 62–69 (62–69 (GYSGAGKS)) interacts with ATP.

This sequence belongs to the ABC transporter superfamily. Methionine importer (TC 3.A.1.24) family. As to quaternary structure, the complex is composed of two ATP-binding proteins (MetN), two transmembrane proteins (MetI) and a solute-binding protein (MetQ).

The protein resides in the cell membrane. It carries out the reaction L-methionine(out) + ATP + H2O = L-methionine(in) + ADP + phosphate + H(+). The catalysed reaction is D-methionine(out) + ATP + H2O = D-methionine(in) + ADP + phosphate + H(+). In terms of biological role, part of the ABC transporter complex MetNIQ involved in methionine import. Responsible for energy coupling to the transport system. This Corynebacterium glutamicum (strain ATCC 13032 / DSM 20300 / JCM 1318 / BCRC 11384 / CCUG 27702 / LMG 3730 / NBRC 12168 / NCIMB 10025 / NRRL B-2784 / 534) protein is Methionine import ATP-binding protein MetN.